Here is a 238-residue protein sequence, read N- to C-terminus: Ribonuclease HII (238 aa).

In terms of domain architecture, RNase H type-2 spans 12–197 (GIVAGVDEAG…VLELLTDDLL (186 aa)). A divalent metal cation-binding residues include aspartate 18, glutamate 19, and aspartate 107.

Belongs to the RNase HII family. Mn(2+) is required as a cofactor. The cofactor is Mg(2+).

The protein resides in the cytoplasm. It carries out the reaction Endonucleolytic cleavage to 5'-phosphomonoester.. In terms of biological role, endonuclease that specifically degrades the RNA of RNA-DNA hybrids. The protein is Ribonuclease HII (rnhB) of Thermotoga maritima (strain ATCC 43589 / DSM 3109 / JCM 10099 / NBRC 100826 / MSB8).